A 396-amino-acid polypeptide reads, in one-letter code: Protein RepA (396 aa).

2 disordered regions span residues 141 to 170 (SKEL…VTKK) and 356 to 396 (NQYK…LPTT). Residues 154–168 (KDSEEEPEKKPEEVT) show a composition bias toward basic and acidic residues.

The protein is Protein RepA (repA) of Bacillus subtilis.